A 131-amino-acid polypeptide reads, in one-letter code: Large ribosomal subunit protein bL17 (131 aa).

This sequence belongs to the bacterial ribosomal protein bL17 family. As to quaternary structure, part of the 50S ribosomal subunit. Contacts protein L32.

This is Large ribosomal subunit protein bL17 from Azoarcus sp. (strain BH72).